The chain runs to 148 residues: Protein SOB FIVE-LIKE 1 (148 aa).

The segment covering 1 to 10 has biased composition (basic and acidic residues); sequence MESPRNHGGS. Disordered stretches follow at residues 1–20 and 33–148; these read MESP…SCES and NDQS…SKTK. The short motif at 20–25 is the SOFL-A element; that stretch reads SGWTMY. A compositionally biased stretch (acidic residues) spans 54 to 76; it reads DGYENDDGDTSDDGGDEESDDSM. The SOFL-B motif lies at 75-84; it reads SMASDASSGP. The span at 91 to 101 shows a compositional bias: basic residues; sequence HINKHAARKNG. The span at 111-128 shows a compositional bias: basic and acidic residues; that stretch reads QHTEKTISNEGEKSDLKA.

This sequence belongs to the SOFL plant protein family. Predominantly expressed in the vascular tissues of seedlings, developing leaves, flowers and siliques, but barely detectable in roots and stems.

The protein localises to the cytoplasm. It localises to the nucleus. Functionally, involved in cytokinin-mediated development. Together with SOFL2, triggers the endogenous content of specific bioactive cytokinins derived from the biosynthetic intermediates trans-zeatin riboside monophosphate (tZRMP) and N(6)-(Delta(2)-isopentenyl)adenosine monophosphate (iPRMP) such as N-glucosides trans-zeatin 7-glucoside (tZ7G), cis-zeatin 7-glucoside (cZ7G) and N(6)-(Delta(2)-isopentenyl)adenine 7-glucoside (iP7G). In Arabidopsis thaliana (Mouse-ear cress), this protein is Protein SOB FIVE-LIKE 1.